Consider the following 217-residue polypeptide: Large ribosomal subunit protein uL3 (217 aa).

Residues Gly133–Val145 show a composition bias toward polar residues. Residues Gly133–Gln153 are disordered. Position 153 is an N5-methylglutamine (Gln153).

The protein belongs to the universal ribosomal protein uL3 family. Part of the 50S ribosomal subunit. Forms a cluster with proteins L14 and L19. Methylated by PrmB.

Functionally, one of the primary rRNA binding proteins, it binds directly near the 3'-end of the 23S rRNA, where it nucleates assembly of the 50S subunit. This chain is Large ribosomal subunit protein uL3, found in Ralstonia pickettii (strain 12J).